We begin with the raw amino-acid sequence, 142 residues long: Large ribosomal subunit protein uL13 (142 aa).

It belongs to the universal ribosomal protein uL13 family. Part of the 50S ribosomal subunit.

Its function is as follows. This protein is one of the early assembly proteins of the 50S ribosomal subunit, although it is not seen to bind rRNA by itself. It is important during the early stages of 50S assembly. The polypeptide is Large ribosomal subunit protein uL13 (Serratia proteamaculans (strain 568)).